The sequence spans 427 residues: Alpha/beta hydrolase gkaG (427 aa).

The active site involves aspartate 368.

Belongs to the AB hydrolase superfamily. As to quaternary structure, homodimer.

It functions in the pathway mycotoxin biosynthesis. Functionally, alpha/beta hydrolase; part of the gene cluster that mediates the biosynthesis of GKK1032, fungal natural products containing a macrocyclic para-cyclophane connected to a decahydrofluorene ring system that show potent antitumor activities. Within the pathway, gkaG catalyzes the Knoevenagel condensation that affords the 3-pyrrolin-2-one ring, using as substrate the polyketide-tyrosyl acyl thioester product of gkaA. The pathway begins with the PKS-NRPS gkaA which, with the help of the trans-enoyl reductase gkaC, synthesizes the polyketide-tyrosyl acyl thioester product which can be reductively off-loaded by the terminal reductase (R) domain in gkaA. The alpha/beta hydrolase gkaG is then required to catalyze the subsequent Knoevenagel condensation that affords the 3-pyrrolin-2-one ring, whereas the three proteins gkaB, gkaX and gkaZ then function synergistically to form the cyclophane. In Penicillium citrinum, this protein is Alpha/beta hydrolase gkaG.